A 417-amino-acid chain; its full sequence is Exodeoxyribonuclease 7 large subunit (417 aa).

The protein belongs to the XseA family. In terms of assembly, heterooligomer composed of large and small subunits.

It localises to the cytoplasm. The enzyme catalyses Exonucleolytic cleavage in either 5'- to 3'- or 3'- to 5'-direction to yield nucleoside 5'-phosphates.. In terms of biological role, bidirectionally degrades single-stranded DNA into large acid-insoluble oligonucleotides, which are then degraded further into small acid-soluble oligonucleotides. In Lactococcus lactis subsp. cremoris (strain MG1363), this protein is Exodeoxyribonuclease 7 large subunit.